A 155-amino-acid chain; its full sequence is MSIKLNALFSDSYVDVSQYRDQHFKGNRYEQEKLLKQSATLYVGNLSFYTTEEQVHELFAKCGDVKRIIIGLDKIKKTACGFCFVEYYTRADAENAMRFVNGTRLDDRIIRTDWDAGFKEGRQYGRGKSGGQVRDEYRQDYDPARGGYGKMVQKS.

MRNA-binding positions include Tyr19, Tyr42, 111-115 (RTDWD), 122-126 (RQYGR), and 132-133 (QV). Residues 39–117 (ATLYVGNLSF…RIIRTDWDAG (79 aa)) enclose the RRM domain. Residues 121-155 (GRQYGRGKSGGQVRDEYRQDYDPARGGYGKMVQKS) form a disordered region. Residues 133-143 (VRDEYRQDYDP) show a composition bias toward basic and acidic residues.

This sequence belongs to the RRM NCBP2 family. As to quaternary structure, component of the nuclear cap-binding complex (CBC), a heterodimer composed of ncbp1/cbp80 and ncbp2/cbp20 that interacts with m7GpppG-capped RNA.

The protein resides in the nucleus. The protein localises to the cytoplasm. Its function is as follows. Component of the cap-binding complex (CBC), which binds co-transcriptionally to the 5' cap of pre-mRNAs and is involved in various processes such as pre-mRNA splicing, translation regulation, nonsense-mediated mRNA decay, RNA-mediated gene silencing (RNAi) by microRNAs (miRNAs) and mRNA export. The CBC complex is involved in mRNA export from the nucleus, leading to the recruitment of the mRNA export machinery to the 5' end of mRNA and to mRNA export in a 5' to 3' direction through the nuclear pore. The CBC complex is also involved in mediating U snRNA and intronless mRNAs export from the nucleus. The CBC complex is essential for a pioneer round of mRNA translation, before steady state translation when the CBC complex is replaced by cytoplasmic cap-binding protein eIF4E. The pioneer round of mRNA translation mediated by the CBC complex plays a central role in nonsense-mediated mRNA decay (NMD), NMD only taking place in mRNAs bound to the CBC complex, but not on eIF4E-bound mRNAs. The CBC complex enhances NMD in mRNAs containing at least one exon-junction complex (EJC), promoting the interaction between upf1 and upf2. The CBC complex is also involved in 'failsafe' NMD, which is independent of the EJC complex, while it does not participate in Staufen-mediated mRNA decay (SMD). During cell proliferation, the CBC complex is also involved in microRNAs (miRNAs) biogenesis via its interaction with srrt/ars2, thereby being required for miRNA-mediated RNA interference. The CBC complex also acts as a negative regulator of parn, thereby acting as an inhibitor of mRNA deadenylation. In the CBC complex, ncbp2/cbp20 recognizes and binds capped RNAs (m7GpppG-capped RNA) but requires ncbp1/cbp80 to stabilize the movement of its N-terminal loop and lock the CBC into a high affinity cap-binding state with the cap structure. The conventional cap-binding complex with NCBP2 binds both small nuclear RNA (snRNA) and messenger (mRNA) and is involved in their export from the nucleus. The sequence is that of Nuclear cap-binding protein subunit 2 (ncbp2) from Danio rerio (Zebrafish).